Here is a 291-residue protein sequence, read N- to C-terminus: Insulin-like growth factor-binding protein 3 (291 aa).

The first 27 residues, 1-27, serve as a signal peptide directing secretion; the sequence is MLRARPALWAAALTALTLLRGPPAARA. An IGF-binding region spans residues 28–134; sequence GAGTMGAGPV…LRPYLLPSAS (107 aa). One can recognise an IGFBP N-terminal domain in the interval 36-119; it reads PVVRCEPCDA…LDGRGLCANA (84 aa). 6 cysteine pairs are disulfide-bonded: Cys40–Cys69, Cys43–Cys71, Cys51–Cys72, Cys60–Cys75, Cys83–Cys96, and Cys90–Cys116. Residues Asn118 and Asn136 are each glycosylated (N-linked (GlcNAc...) asparagine). 2 disordered regions span residues 132 to 162 and 177 to 211; these read SASG…RVPV and KGHA…TEYG. A compositionally biased stretch (polar residues) spans 146–155; that stretch reads MGSTENQAGP. Position 148 is a phosphoserine (Ser148). A compositionally biased stretch (basic and acidic residues) spans 177-190; sequence KGHAKDSQRYKVDY. Residues 191 to 202 are compositionally biased toward polar residues; the sequence is ESQSTDTQNFSS. Asn199 carries N-linked (GlcNAc...) asparagine glycosylation. At Ser201 the chain carries Phosphoserine. The 76-residue stretch at 210–285 folds into the Thyroglobulin type-1 domain; the sequence is YGPCRREMED…DVKGKGDVHC (76 aa). 3 disulfides stabilise this stretch: Cys213-Cys240, Cys251-Cys262, and Cys264-Cys285.

Interacts with XLKD1. Binds IGF2 more than IGF1. Forms a ternary complex of about 140 to 150 kDa with IGF1 or IGF2 and a 85 kDa glycoprotein (ALS). Interacts with humanin; humanin competes with importin KPNB1 for binding to IGFBP3, blocking IGFBP3 nuclear import and IGFBP3-mediated apoptosis. Interacts with TMEM219. Interacts with RXRA; this interaction modulates the transcriptional activity of RXRA. Interacts with LRP1; this interaction mediates cell growth inhibition independent of IGF1. Post-translationally, phosphorylated by FAM20C in the extracellular medium. Phosphorylated by CK2; resulting in decreased nuclear localization. In terms of tissue distribution, plasma; expressed by most tissues.

The protein resides in the secreted. It is found in the nucleus. Functionally, multifunctional protein that plays a critical role in regulating the availability of IGFs such as IGF1 and IGF2 to their receptors and thereby regulates IGF-mediated cellular processes including proliferation, differentiation, and apoptosis in a cell-type specific manner. Also exhibits IGF-independent antiproliferative and apoptotic effects mediated by its receptor TMEM219/IGFBP-3R. Inhibits the positive effect of humanin on insulin sensitivity. Promotes testicular germ cell apoptosis. Acts via LRP-1/alpha2M receptor, also known as TGF-beta type V receptor, to mediate cell growth inhibition independent of IGF1. Mechanistically, induces serine-specific dephosphorylation of IRS1 or IRS2 upon ligation to its receptor, leading to the inhibitory cascade. In the nucleus, interacts with transcription factors such as retinoid X receptor-alpha/RXRA to regulate transcriptional signaling and apoptosis. The protein is Insulin-like growth factor-binding protein 3 (IGFBP3) of Bos taurus (Bovine).